Reading from the N-terminus, the 407-residue chain is Semenogelin-2 (407 aa).

The signal sequence occupies residues 1–23; that stretch reads MKSIILFVLSLVLILEKQAAVMG. Disordered regions lie at residues 25–60, 133–158, 173–192, and 272–407; these read KDGS…TKSK, GQAH…LSSQ, KEQA…GSQS, and NLNQ…NKIS. Polar residues-rich tracts occupy residues 31 to 40, 137 to 158, and 174 to 192; these read QLPSGSSQFP, CGTQ…LSSQ, and EQAS…GSQS. Residues 292 to 310 show a composition bias toward basic and acidic residues; it reads RTEERQLNHGEKSVQKDVS. The span at 325–334 shows a compositional bias: polar residues; the sequence is KSQNQVTIHS. Positions 335–345 are enriched in basic and acidic residues; sequence QDQEHGHKENK. Positions 372-397 are enriched in polar residues; it reads GSISIQTEEQIHGKSQNXVRIPSQAQ.

It belongs to the semenogelin family. As to quaternary structure, interacts with SERPINA5.

The protein localises to the secreted. Its function is as follows. Participates in the formation of a gel matrix (sperm coagulum) entrapping the accessory gland secretions and ejaculated spermatozoa. The chain is Semenogelin-2 (SEMG2) from Pan troglodytes (Chimpanzee).